A 208-amino-acid polypeptide reads, in one-letter code: Cysteine-rich protein 2 (208 aa).

In terms of domain architecture, LIM zinc-binding 1 spans 5 to 57 (CPKCDKTVYFAEKVSSLGKDWHKFCLKCERCNKTLTPGGHAEHDGKPFCHKPC). K23 is modified (N6-acetyllysine). At S104 the chain carries Phosphoserine. The 53-residue stretch at 126-178 (CPRCNKRVYFAEKVTSLGKDWHRPCLRCERCSKTLTPGGHAEHDGQPYCHKPC) folds into the LIM zinc-binding 2 domain. K138 and K144 each carry N6-acetyllysine.

In terms of assembly, interacts with TGFB1I1.

The polypeptide is Cysteine-rich protein 2 (Crip2) (Mus musculus (Mouse)).